An 863-amino-acid chain; its full sequence is Ribosomal protein S6 kinase alpha-5 (863 aa).

Residues 1 to 21 (MEGEGGGSGGAGTSGDSGDGG) are compositionally biased toward gly residues. The segment at 1–22 (MEGEGGGSGGAGTSGDSGDGGE) is disordered. The Protein kinase 1 domain occupies 48 to 317 (FELLKVLGTG…AEEIKEHLFF (270 aa)). Residues 54–62 (LGTGAYGKV) and Lys-80 each bind ATP. Catalysis depends on Asp-176, which acts as the Proton acceptor. The residue at position 211 (Ser-211) is a Phosphoserine; by autocatalysis. The AGC-kinase C-terminal domain occupies 318–386 (EKIKWDDLAA…VAPSILFKRN (69 aa)). Phosphoserine; by MAPK1, MAPK3 and MAPK14 is present on Ser-359. Phosphoserine; by autocatalysis occurs at positions 375 and 380. Positions 428–675 (DKPLGEGSFS…SCDLWSLGVI (248 aa)) constitute a Protein kinase 2 domain. ATP-binding positions include 431–440 (LGEGSFSICR) and Lys-454. The active-site Proton acceptor is Asp-608. Thr-645 bears the Phosphothreonine; by MAPK1, MAPK3 and MAPK14 mark. Residues Ser-711, Ser-721, Ser-755, and Ser-759 each carry the phosphoserine modification. Residue Thr-764 is modified to Phosphothreonine. Positions 805–863 (AKRRKMKRTSTSTETRSSSSESSRSSSSQSHGKTTPTKTLQPSNPTEGSNPDTLFQFSD) are disordered. Residues 813–832 (TSTSTETRSSSSESSRSSSS) are compositionally biased toward low complexity. Residues Ser-814, Ser-816, and Ser-822 each carry the phosphoserine; by autocatalysis modification. Over residues 833-863 (QSHGKTTPTKTLQPSNPTEGSNPDTLFQFSD) the composition is skewed to polar residues. Ser-862 is modified (phosphoserine).

The protein belongs to the protein kinase superfamily. AGC Ser/Thr protein kinase family. S6 kinase subfamily. As to quaternary structure, forms a complex with either MAPK1/ERK2 or MAPK3/ERK1 in quiescent cells which transiently dissociates following mitogenic stimulation. Also associates with MAPK14/p38-alpha. Activated RPS6KA5 associates with and phosphorylates the NF-kappa-B p65 subunit RELA. Interacts with CREBBP and EP300. Mg(2+) serves as cofactor. Post-translationally, ser-375 and Thr-645 phosphorylation is required for kinase activity. Ser-375 and Ser-211 are autophosphorylated by the C-terminal kinase domain, and their phosphorylation is essential for the catalytic activity of the N-terminal kinase domain. Phosphorylated at Ser-359, Thr-645 and Thr-764 by MAPK1/ERK2, MAPK3/ERK1 and MAPK14/p38-alpha. Autophosphorylated at Ser-814, Ser-816 and Ser-822 by the N-terminal kinase domain. Ubiquitinated.

The protein resides in the nucleus. The enzyme catalyses L-seryl-[protein] + ATP = O-phospho-L-seryl-[protein] + ADP + H(+). It carries out the reaction L-threonyl-[protein] + ATP = O-phospho-L-threonyl-[protein] + ADP + H(+). Its activity is regulated as follows. Activated by phosphorylation at Ser-359, Thr-645 and Thr-764 by MAPK1/ERK2, MAPK3/ERK1 and MAPK14/p38-alpha, and by further autophosphorylation of Ser-211, Ser-375 and Ser-380 by the activated C-terminal kinase domain. The active N-terminal kinase domain finally phosphorylates downstream substrates, as well as Ser-814, Ser-816 and Ser-822 in its own C-terminal region. Functionally, serine/threonine-protein kinase that is required for the mitogen or stress-induced phosphorylation of the transcription factors CREB1 and ATF1 and for the regulation of the transcription factors RELA, STAT3 and ETV1/ER81, and that contributes to gene activation by histone phosphorylation and functions in the regulation of inflammatory genes. Phosphorylates CREB1 and ATF1 in response to mitogenic or stress stimuli such as UV-C irradiation, epidermal growth factor (EGF) and anisomycin. Plays an essential role in the control of RELA transcriptional activity in response to TNF and upon glucocorticoid, associates in the cytoplasm with the glucocorticoid receptor NR3C1 and contributes to RELA inhibition and repression of inflammatory gene expression. In skeletal myoblasts is required for phosphorylation of RELA at 'Ser-276' during oxidative stress. In erythropoietin-stimulated cells, is necessary for the 'Ser-727' phosphorylation of STAT3 and regulation of its transcriptional potential. Phosphorylates ETV1/ER81 at 'Ser-191' and 'Ser-216', and thereby regulates its ability to stimulate transcription, which may be important during development and breast tumor formation. Directly represses transcription via phosphorylation of 'Ser-1' of histone H2A. Phosphorylates 'Ser-10' of histone H3 in response to mitogenics, stress stimuli and EGF, which results in the transcriptional activation of several immediate early genes, including proto-oncogenes c-fos/FOS and c-jun/JUN. May also phosphorylate 'Ser-28' of histone H3. Mediates the mitogen- and stress-induced phosphorylation of high mobility group protein 1 (HMGN1/HMG14). In lipopolysaccharide-stimulated primary macrophages, acts downstream of the Toll-like receptor TLR4 to limit the production of pro-inflammatory cytokines. Functions probably by inducing transcription of the MAP kinase phosphatase DUSP1 and the anti-inflammatory cytokine interleukin 10 (IL10), via CREB1 and ATF1 transcription factors. Plays a role in neuronal cell death by mediating the downstream effects of excitotoxic injury. Phosphorylates TRIM7 at 'Ser-106' in response to growth factor signaling via the MEK/ERK pathway, thereby stimulating its ubiquitin ligase activity. This chain is Ribosomal protein S6 kinase alpha-5 (Rps6ka5), found in Mus musculus (Mouse).